Reading from the N-terminus, the 357-residue chain is Aurora kinase A- and ninein-interacting protein (357 aa).

The segment covering 72-93 (TSQQGKTNGADQRSVSSHTESQ) has biased composition (polar residues). The segment at 72-102 (TSQQGKTNGADQRSVSSHTESQTNKESKEDA) is disordered. Residues 189-357 (QKEGEDSSCE…EGNQVIRHQA (169 aa)) are interaction with AURKA. Residues 281-357 (KDSWSQLFTE…EGNQVIRHQA (77 aa)) form an interaction with RBBP8/CtIP region. Ser292 is subject to Phosphoserine.

It belongs to the AUNIP family. As to quaternary structure, interacts (via C-terminus) with AURKA (via C-terminus). Interacts (via N-terminus) with NIN; this interaction blocks NIN phosphorylation by both AURKA and GSK3B. Identified in a complex with NIN and AURKA. Interacts with RBBP8/CtIP.

The protein localises to the nucleus. It localises to the chromosome. The protein resides in the cytoplasm. Its subcellular location is the cytoskeleton. It is found in the microtubule organizing center. The protein localises to the centrosome. It localises to the spindle pole. In terms of biological role, DNA-binding protein that accumulates at DNA double-strand breaks (DSBs) following DNA damage and promotes DNA resection and homologous recombination. Serves as a sensor of DNA damage: binds DNA with a strong preference for DNA substrates that mimic structures generated at stalled replication forks, and anchors RBBP8/CtIP to DSB sites to promote DNA end resection and ensuing homologous recombination repair. Inhibits non-homologous end joining (NHEJ). Required for the dynamic movement of AURKA at the centrosomes and spindle apparatus during the cell cycle. The polypeptide is Aurora kinase A- and ninein-interacting protein (Bos taurus (Bovine)).